We begin with the raw amino-acid sequence, 213 residues long: Thiopurine S-methyltransferase (213 aa).

S-adenosyl-L-methionine is bound by residues Trp10, Leu46, Glu67, and Arg124.

The protein belongs to the class I-like SAM-binding methyltransferase superfamily. TPMT family.

The protein localises to the cytoplasm. It carries out the reaction S-adenosyl-L-methionine + a thiopurine = S-adenosyl-L-homocysteine + a thiopurine S-methylether.. This Xanthobacter autotrophicus (strain ATCC BAA-1158 / Py2) protein is Thiopurine S-methyltransferase.